The chain runs to 454 residues: uncharacterized protein (454 aa).

In terms of domain architecture, HNH spans Cys-364 to Leu-405.

Belongs to the Rv1128c/1148c/1588c/1702c/1945/3466 family.

This is an uncharacterized protein from Mycobacterium tuberculosis (strain CDC 1551 / Oshkosh).